The primary structure comprises 339 residues: Phosphoribosylformylglycinamidine cyclo-ligase (339 aa).

The protein belongs to the AIR synthase family.

Its subcellular location is the cytoplasm. It carries out the reaction 2-formamido-N(1)-(5-O-phospho-beta-D-ribosyl)acetamidine + ATP = 5-amino-1-(5-phospho-beta-D-ribosyl)imidazole + ADP + phosphate + H(+). The protein operates within purine metabolism; IMP biosynthesis via de novo pathway; 5-amino-1-(5-phospho-D-ribosyl)imidazole from N(2)-formyl-N(1)-(5-phospho-D-ribosyl)glycinamide: step 2/2. This is Phosphoribosylformylglycinamidine cyclo-ligase from Methanobrevibacter smithii (strain ATCC 35061 / DSM 861 / OCM 144 / PS).